A 295-amino-acid chain; its full sequence is NAD kinase (295 aa).

Asp-72 serves as the catalytic Proton acceptor. NAD(+) is bound by residues 72 to 73 (DG), 146 to 147 (ND), Arg-157, Lys-174, Asp-176, 187 to 192 (TAYALS), and Gln-247.

It belongs to the NAD kinase family. It depends on a divalent metal cation as a cofactor.

The protein resides in the cytoplasm. It carries out the reaction NAD(+) + ATP = ADP + NADP(+) + H(+). Involved in the regulation of the intracellular balance of NAD and NADP, and is a key enzyme in the biosynthesis of NADP. Catalyzes specifically the phosphorylation on 2'-hydroxyl of the adenosine moiety of NAD to yield NADP. This chain is NAD kinase, found in Azotobacter vinelandii (strain DJ / ATCC BAA-1303).